A 229-amino-acid chain; its full sequence is NAD(P)H-hydrate epimerase (229 aa).

The region spanning 11 to 222 is the YjeF N-terminal domain; sequence YAAADIRAAE…DVGLDLSGAT (212 aa). 59 to 63 serves as a coordination point for (6S)-NADPHX; the sequence is NNGGD. K(+) is bound by residues asparagine 60 and aspartate 124. (6S)-NADPHX contacts are provided by residues 128–136 and aspartate 164; that span reads GIGTTASPA. A K(+)-binding site is contributed by serine 167.

It belongs to the NnrE/AIBP family. It depends on K(+) as a cofactor.

It catalyses the reaction (6R)-NADHX = (6S)-NADHX. It carries out the reaction (6R)-NADPHX = (6S)-NADPHX. Its function is as follows. Catalyzes the epimerization of the S- and R-forms of NAD(P)HX, a damaged form of NAD(P)H that is a result of enzymatic or heat-dependent hydration. This is a prerequisite for the S-specific NAD(P)H-hydrate dehydratase to allow the repair of both epimers of NAD(P)HX. The protein is NAD(P)H-hydrate epimerase of Clavibacter sepedonicus (Clavibacter michiganensis subsp. sepedonicus).